Here is a 219-residue protein sequence, read N- to C-terminus: Carbonic anhydrase 1 (219 aa).

The Zn(2+) site is built by cysteine 39, aspartate 41, histidine 98, and cysteine 101.

Belongs to the beta-class carbonic anhydrase family. In terms of assembly, oligomer. Requires Zn(2+) as cofactor.

It carries out the reaction hydrogencarbonate + H(+) = CO2 + H2O. Reversible hydration of carbon dioxide. Carbon dioxide formed in the bicarbonate-dependent decomposition of cyanate by cyanase (CynS) diffuses out of the cell faster than it would be hydrated to bicarbonate, so the apparent function of this enzyme is to catalyze the hydration of carbon dioxide and thus prevent depletion of cellular bicarbonate. This Escherichia coli O157:H7 protein is Carbonic anhydrase 1 (cynT).